Here is a 160-residue protein sequence, read N- to C-terminus: Ribosomal RNA large subunit methyltransferase H (160 aa).

S-adenosyl-L-methionine is bound at residue G108.

The protein belongs to the RNA methyltransferase RlmH family. As to quaternary structure, homodimer.

The protein resides in the cytoplasm. The enzyme catalyses pseudouridine(1915) in 23S rRNA + S-adenosyl-L-methionine = N(3)-methylpseudouridine(1915) in 23S rRNA + S-adenosyl-L-homocysteine + H(+). Its function is as follows. Specifically methylates the pseudouridine at position 1915 (m3Psi1915) in 23S rRNA. This Rhodopseudomonas palustris (strain BisA53) protein is Ribosomal RNA large subunit methyltransferase H.